The sequence spans 733 residues: Leucine-rich repeat neuronal protein 4 (733 aa).

An N-terminal signal peptide occupies residues 1 to 19 (MRWTLMLQLLQLLLQLLMA). At 20 to 676 (QSQSLERISQ…CATFTTKPSS (657 aa)) the chain is on the extracellular side. LRR repeat units lie at residues 62–82 (GVTTLNLANRSLESLPSCLPR), 83–106 (TLRSLDGSHNLLRALSEPVLGRLP), 107–128 (ELRVLTLHHNRISVLHWGRDTL), 130–151 (ELRELDLSHNLLTELPPCAGPS), 154–175 (SLRSLALAGNPLRALLPRTFAC), 178–199 (ALRLLNLSCSELGHIAQEAFAG), 207–230 (ALELLDLSGTSLERVESGWIRNLP), 231–253 (KLKSLFLRKMPRLKTLEGDIFKM), 256–278 (NLRQLDCGDSPALTSVHTEIFQD), and 281–302 (NLQVLQFQNCNLSSFGPWNSSQ). Residue Asn-70 is glycosylated (N-linked (GlcNAc...) asparagine). Asn-183 carries N-linked (GlcNAc...) asparagine glycosylation. 5 N-linked (GlcNAc...) asparagine glycosylation sites follow: Asn-291, Asn-299, Asn-327, Asn-408, and Asn-469. Residues 311–364 (NPLICSCELAWLLVDVNKTVLHRAADTMCEPALGSTGPFSGPLSLSHLSNVCRS) form the LRRCT domain. Residues 395 to 423 (STALSAQPGGSQQNITKVPSLTMTSPTQG) form a disordered region. A disordered region spans residues 480–518 (KYLEPLPTSPNPRSLPQTKQRTQATPRALHTDPPQDEIP). Residues 490-504 (NPRSLPQTKQRTQAT) are compositionally biased toward polar residues. Positions 576–675 (TPDPPTLQGV…SCATFTTKPS (100 aa)) constitute a Fibronectin type-III domain. A glycan (N-linked (GlcNAc...) asparagine) is linked at Asn-619. The helical transmembrane segment at 677–697 (VVIFWGLCTASGLLLVSTLVL) threads the bilayer. At 698 to 733 (SVCLWRQRWKPHRQFYDTHLVAFKNPARAEEVTQWE) the chain is on the cytoplasmic side.

It localises to the membrane. Functionally, may play an important role in hippocampus-dependent long-lasting memory. This is Leucine-rich repeat neuronal protein 4 (Lrrn4) from Mus musculus (Mouse).